The chain runs to 130 residues: Small ribosomal subunit protein uS9 (130 aa).

It belongs to the universal ribosomal protein uS9 family.

The protein is Small ribosomal subunit protein uS9 of Geobacillus sp. (strain WCH70).